The chain runs to 527 residues: GMP synthase [glutamine-hydrolyzing] (527 aa).

The region spanning Lys-19–Asp-212 is the Glutamine amidotransferase type-1 domain. Catalysis depends on Cys-96, which acts as the Nucleophile. Active-site residues include His-186 and Glu-188. Residues Trp-213 to Arg-402 form the GMPS ATP-PPase domain. Ser-240–Ser-246 provides a ligand contact to ATP.

As to quaternary structure, homodimer.

The catalysed reaction is XMP + L-glutamine + ATP + H2O = GMP + L-glutamate + AMP + diphosphate + 2 H(+). It functions in the pathway purine metabolism; GMP biosynthesis; GMP from XMP (L-Gln route): step 1/1. Catalyzes the synthesis of GMP from XMP. This Streptococcus thermophilus (strain CNRZ 1066) protein is GMP synthase [glutamine-hydrolyzing].